Consider the following 672-residue polypeptide: MAQPSILFSLTLIFLISIKSCDAKYRTSFFKTPNCSIYPDAEKCELNKTWTQEQVCDYVNCNDNACEGGGYLLWTQYVECASSTFSRVILIIVGVIYMLVLFIMVSSAADDFFSPSISSIVAHLRISESVAGVTFMAFGNGAPDVFGSIASVLSSPTPKADLALGELFGGGLFVTTMVVSTIILTSPFDVEVFSTIRDLLFYLVALSFLAFCFVFYNRVTLWMPLTFLGLYLLYVITVIGAQAVHNRKRKALQKQNSTKSRKSIKSLRSRKSIHSVAPMPVIPEIEVHDQEAPFPEISVVTGAIDKLKEHMAEKAQTTRRYTKRASFMVNGDGNLNGLHPYATHNHLGISRRESELSDEDEEFVVIHGHVFQGHEARSRAASLVPEPMQIKSWRSKDILKDLAEHLDPRPEAEDWEEMNIFSKVMAYINVVPNLLFKLTIPLNEMSWSKPLTLLHAFTCPAFLLFSIQFFLETPFSGSPGLWVYGLAVSIVLAILIMVFTELSVQPKYYKEIYSYSGFIMSIAWIYLISSEVVNVVTMLGVVSRVSHEVLGLTILAWSNSIGDLIADVSVVKQGYPRMAMAAAIGGPLFNLLMGFGLPFTIAKLQGKYISMTINPTYRLLILFLAISLLATLIGIPVQKFRLQRPHAAVLISIYIAFIVFVILSETGVLVWN.

The N-terminal stretch at 1 to 23 (MAQPSILFSLTLIFLISIKSCDA) is a signal peptide. 12 helical membrane-spanning segments follow: residues 88–108 (VILI…VSSA), 130–150 (VAGV…GSIA), 164–184 (LGEL…TIIL), 196–216 (IRDL…FVFY), 221–241 (LWMP…VIGA), 451–471 (LTLL…QFFL), 479–499 (PGLW…IMVF), 522–542 (IAWI…LGVV), 551–571 (GLTI…VSVV), 581–601 (AAAI…PFTI), 620–640 (LILF…VQKF), and 649–669 (VLIS…TGVL).

This sequence belongs to the Ca(2+):cation antiporter (CaCA) (TC 2.A.19) family.

The protein resides in the membrane. The sequence is that of Putative sodium/calcium exchanger 7 (ncx-7) from Caenorhabditis elegans.